A 110-amino-acid polypeptide reads, in one-letter code: Small ribosomal subunit protein eS25 (110 aa).

The tract at residues 1-38 is disordered; that stretch reads MGGKKKPTLSQLAKKAEKEKAQQAQKAKKEVKKEETPA. A compositionally biased stretch (basic and acidic residues) spans 14-38; it reads KKAEKEKAQQAQKAKKEVKKEETPA.

It belongs to the eukaryotic ribosomal protein eS25 family.

The sequence is that of Small ribosomal subunit protein eS25 (rps25e) from Pyrobaculum aerophilum (strain ATCC 51768 / DSM 7523 / JCM 9630 / CIP 104966 / NBRC 100827 / IM2).